We begin with the raw amino-acid sequence, 584 residues long: MPNYAIFRFEKHKTVGTIKAASLHMTRGRETQNADPDRKELNEILKGSTDPSADVKSMLNKIQKETGKPLRKNGVQAIELFFGMSPEWSKQATPEKLEHWKTITQQWAEQTFGENNLVSLQLHADETTPHLTGFMVPRDPDTGRLNASRWFDGRKALSALQTGYAASMEPLGLARGVKGSKATHQRVQRHYGNINKTLQLDPKIQAPIPPSIFTNKEEWAEKERLKAQKSALSVIQPLADKAARYVEEKKRADRAEEALSLARRKADSMRAIPLSDVLKTLGMELDPADKKQWRDPEHRFRITIDNYKFYDHSAQKGGGGAIDLLMHTTGQDYKGALSWLADRFGDETARHDMLLNDLYRSKIRINEAKQRPAFKQPEHKNEPKIREFLNSRGISFNNIPDSIRTDDRGNVAFLMYDDKDTLQGAELRGTSSGFKGLALGSSREAHFTGSINVKNDEKYDLYIAESAIDAISVVGFLSPEKIKAGVKLLSTSGVRTSLTKTLRKIVEKASSVHIAYDWDAVGQRAASLLVGAIKAAFPTKKVENWLPPKEQMIHGKDWNDLLMVKRGLKKTVAPKQTVKRKIRF.

The Toprim domain maps to 459–548; sequence YDLYIAESAI…TKKVENWLPP (90 aa).

This chain is 65 kDa protein, found in Zymomonas mobilis subsp. mobilis (strain ATCC 10988 / DSM 424 / LMG 404 / NCIMB 8938 / NRRL B-806 / ZM1).